Reading from the N-terminus, the 627-residue chain is DNA mismatch repair protein MutL (627 aa).

The span at 354 to 364 (DEKPPEKKVPE) shows a compositional bias: basic and acidic residues. The disordered stretch occupies residues 354–374 (DEKPPEKKVPEKSTAPSYSPM).

The protein belongs to the DNA mismatch repair MutL/HexB family.

In terms of biological role, this protein is involved in the repair of mismatches in DNA. It is required for dam-dependent methyl-directed DNA mismatch repair. May act as a 'molecular matchmaker', a protein that promotes the formation of a stable complex between two or more DNA-binding proteins in an ATP-dependent manner without itself being part of a final effector complex. Overexpression of mutSL partially suppresses the high spontaneous mutation frequency of a ytkD/mutM/mutY triple disruption which lacks the system required to prevent damage by oxidized guanine (8-oxo-dGTP). This suggests that MutSL also functions to repair mismatches due to oxidative stress in both growing and stationary phase cells. The protein is DNA mismatch repair protein MutL of Bacillus subtilis (strain 168).